The sequence spans 876 residues: MPYQSPITFQEPQLTVESLKQQLESFTEYQKQEFFDHHPVTDLVLGRSEYMDLLLHRLWQFFGFDELVEVSLVAVGGYGRGELHPLSDIDLLVLSQQPLSEQVANKISQFLTLLWDLKLEIGHAVRTVEQCAEIGKADLTVATNLQEARLLCGCEETFHRLKMVIHSESFWPSEIFYQAKVREQKERHARYHDTTYNLEPDIKSTPGGLRDIHTLSWVARRHFGATSLYEMSRFGFLTDAEYRELVECQDFLWRVRFALHIELKRYDNRLTFAHQVQVARHLGYFGEGNRGIEMMMKEFFRTLRRVAELNKMLLKIFDKAILNNGEEAEAVIIDDDFQRRGNMIEARKPALFQARPETILDMFLHMASDSTIESVAPATMRQLRTARRRLNKFLHTLPAAREKFIELVRHPNALHKAFSQMHKLGVLAAYLPQWNQIVGQMQFDLFHVYTVDEHSIRLLKHIHLFSDANNHDRHPICCEIYPKIQKKELLILAAIFHDIGKGRGGDHSEIGADEAFDFCIEHGLSKPEAKLVAWLVKNHLLMSVTAQRRDIYDPDVIIEFAKKVRDEERLEYLVCLTVADICATNPELWNSWKRTLLAELFYSTQRALRRGLENPVDVRERIRHNQQMASALLRKEGFSSREIEVLWQRFKADYFLRHTHKQIAWHCTHLLRHEDSSKPLVLLSKKATRGGTEVFIYTKDQAALFATVVAELDRRNLNVHDAQIMASKDGYVLDTFMVLDQNGQAIEEDRHQALIRHLVHVLEDGRPTTQKARRIPRNLQHFKVKTQVDFLPTKSKKRTLMEFVALDTPGLLATVGATFAELNLDLHAAKITTIGERAEDLFILTNAQGTRLNEEEEQHLREKLIEHVAELAPSAQ.

The tract at residues 1–332 (MPYQSPITFQ…NNGEEAEAVI (332 aa)) is uridylyltransferase. The interval 333 to 692 (IDDDFQRRGN…LSKKATRGGT (360 aa)) is uridylyl-removing. The HD domain occupies 451 to 573 (VDEHSIRLLK…VRDEERLEYL (123 aa)). ACT domains are found at residues 693–777 (EVFI…RIPR) and 800–876 (LMEF…PSAQ).

The protein belongs to the GlnD family. It depends on Mg(2+) as a cofactor.

The enzyme catalyses [protein-PII]-L-tyrosine + UTP = [protein-PII]-uridylyl-L-tyrosine + diphosphate. It carries out the reaction [protein-PII]-uridylyl-L-tyrosine + H2O = [protein-PII]-L-tyrosine + UMP + H(+). Its activity is regulated as follows. Uridylyltransferase (UTase) activity is inhibited by glutamine, while glutamine activates uridylyl-removing (UR) activity. Its function is as follows. Modifies, by uridylylation and deuridylylation, the PII regulatory proteins (GlnB and homologs), in response to the nitrogen status of the cell that GlnD senses through the glutamine level. Under low glutamine levels, catalyzes the conversion of the PII proteins and UTP to PII-UMP and PPi, while under higher glutamine levels, GlnD hydrolyzes PII-UMP to PII and UMP (deuridylylation). Thus, controls uridylylation state and activity of the PII proteins, and plays an important role in the regulation of nitrogen assimilation and metabolism. In Vibrio cholerae serotype O1 (strain ATCC 39315 / El Tor Inaba N16961), this protein is Bifunctional uridylyltransferase/uridylyl-removing enzyme.